The following is a 124-amino-acid chain: Small ribosomal subunit protein uS12 (124 aa).

Residue D89 is modified to 3-methylthioaspartic acid.

Belongs to the universal ribosomal protein uS12 family. As to quaternary structure, part of the 30S ribosomal subunit. Contacts proteins S8 and S17. May interact with IF1 in the 30S initiation complex.

Its function is as follows. With S4 and S5 plays an important role in translational accuracy. Functionally, interacts with and stabilizes bases of the 16S rRNA that are involved in tRNA selection in the A site and with the mRNA backbone. Located at the interface of the 30S and 50S subunits, it traverses the body of the 30S subunit contacting proteins on the other side and probably holding the rRNA structure together. The combined cluster of proteins S8, S12 and S17 appears to hold together the shoulder and platform of the 30S subunit. The protein is Small ribosomal subunit protein uS12 of Shewanella halifaxensis (strain HAW-EB4).